The sequence spans 257 residues: Reticulon-like protein B4 (257 aa).

The segment at 19–42 is disordered; it reads IHGHGDSSSLSDSDDDKKSTSSSS. The Reticulon domain maps to 68-257; that stretch reads PADIFLWRNK…PRGALNKKKD (190 aa). The next 3 helical transmembrane spans lie at 78–98, 99–119, and 173–193; these read KVSG…ELFE, YHLL…LFLW, and FILV…YNFL.

As to quaternary structure, interacts with VirB2.

The protein resides in the endoplasmic reticulum membrane. In terms of biological role, plays a role in the Agrobacterium-mediated plant transformation via its interaction with VirB2, the major component of the T-pilus. The polypeptide is Reticulon-like protein B4 (RTNLB4) (Arabidopsis thaliana (Mouse-ear cress)).